The following is a 953-amino-acid chain: 26S proteasome non-ATPase regulatory subunit 1 (953 aa).

An N-acetylmethionine; partial modification is found at Met1. Phosphothreonine is present on Thr273. The interval 279–318 (PGSTNTGTVPGSEKDSDSMETEEKTGSAFVGKTPEASPEP) is disordered. Position 290 is a phosphoserine (Ser290). Basic and acidic residues predominate over residues 290–303 (SEKDSDSMETEEKT). N6-acetyllysine is present on Lys310. Thr311 carries the post-translational modification Phosphothreonine. The residue at position 315 (Ser315) is a Phosphoserine. PC repeat units follow at residues 403 to 436 (TATA…PGSA), 441 to 474 (GGLY…DIVR), 476 to 510 (GGSL…VTGE), 511 to 545 (AAGL…EKIL), 547 to 580 (GLAV…ILRR), 581 to 616 (SGMY…DVRR), 617 to 649 (AAVE…PHVR), 651 to 685 (GAAM…YVRQ), 686 to 726 (GALI…DVMA), and 729 to 761 (GAIL…PSVV). N6-acetyllysine is present on Lys720. The residue at position 830 (Thr830) is a Phosphothreonine. Ser834 bears the Phosphoserine mark. Disordered stretches follow at residues 839–881 (AKKK…LDNP) and 930–953 (AHGP…YIDD). Basic and acidic residues-rich tracts occupy residues 842–852 (KEKEKEKKEEE) and 859–872 (AEKK…KEPE). Positions 936 to 953 (EEEEQEPEPPEPFEYIDD) are enriched in acidic residues.

Belongs to the proteasome subunit S1 family. Component of the 19S proteasome regulatory particle complex. The 26S proteasome consists of a 20S core particle (CP) and two 19S regulatory subunits (RP). The regulatory particle is made of a lid composed of 9 subunits, a base containing 6 ATPases and few additional components including PSMD1. Interacts with ADRM1. Interacts with ZFAND1.

Functionally, component of the 26S proteasome, a multiprotein complex involved in the ATP-dependent degradation of ubiquitinated proteins. This complex plays a key role in the maintenance of protein homeostasis by removing misfolded or damaged proteins, which could impair cellular functions, and by removing proteins whose functions are no longer required. Therefore, the proteasome participates in numerous cellular processes, including cell cycle progression, apoptosis, or DNA damage repair. The sequence is that of 26S proteasome non-ATPase regulatory subunit 1 (PSMD1) from Pongo abelii (Sumatran orangutan).